Consider the following 140-residue polypeptide: Histone H2B (140 aa).

A compositionally biased stretch (basic and acidic residues) spans 1–10 (MPPKAAEKKP). The disordered stretch occupies residues 1 to 48 (MPPKAAEKKPSTGGKAPAGKAPAEKKEAGKKTAAAATGDKKKRGKTRK). Residues lysine 8 and lysine 9 each carry the N6-acetyllysine; alternate modification. Glycyl lysine isopeptide (Lys-Gly) (interchain with G-Cter in SUMO); alternate cross-links involve residues lysine 8 and lysine 9. The span at 11–21 (STGGKAPAGKA) shows a compositional bias: low complexity. At lysine 15 the chain carries N6-acetyllysine. Lysine 25 bears the N6-acetyllysine; alternate mark. A Glycyl lysine isopeptide (Lys-Gly) (interchain with G-Cter in SUMO); alternate cross-link involves residue lysine 25. Residue lysine 26 forms a Glycyl lysine isopeptide (Lys-Gly) (interchain with G-Cter in SUMO) linkage. Lysine 134 is covalently cross-linked (Glycyl lysine isopeptide (Lys-Gly) (interchain with G-Cter in ubiquitin)).

It belongs to the histone H2B family. In terms of assembly, the nucleosome is a histone octamer containing two molecules each of H2A, H2B, H3 and H4 assembled in one H3-H4 heterotetramer and two H2A-H2B heterodimers. The octamer wraps approximately 147 bp of DNA. Post-translationally, monoubiquitinated by the ubc2-bre1 complex to form H2BK123ub1. H2BK123ub1 gives a specific tag for epigenetic transcriptional activation and is also prerequisite for H3K4me and H3K79me formation. H2BK123ub1 also modulates the formation of double-strand breaks during meiosis and is a prerequisite for DNA-damage checkpoint activation. Acetylated by gcn5 to form H2BK11ac and H2BK16ac. H2BK16ac can also be formed by esa1. Acetylation of N-terminal lysines and particularly formation of H2BK11acK16ac has a positive effect on transcription. In terms of processing, sumoylation to form H2BK6su or H2BK7su, and probably also H2BK16su or H2BK17su, occurs preferentially near the telomeres and represses gene transcription.

It localises to the nucleus. The protein localises to the chromosome. Core component of nucleosome. Nucleosomes wrap and compact DNA into chromatin, limiting DNA accessibility to the cellular machineries which require DNA as a template. Histones thereby play a central role in transcription regulation, DNA repair, DNA replication and chromosomal stability. DNA accessibility is regulated via a complex set of post-translational modifications of histones, also called histone code, and nucleosome remodeling. In Neosartorya fischeri (strain ATCC 1020 / DSM 3700 / CBS 544.65 / FGSC A1164 / JCM 1740 / NRRL 181 / WB 181) (Aspergillus fischerianus), this protein is Histone H2B (htb1).